Reading from the N-terminus, the 274-residue chain is Oxidized low-density lipoprotein receptor 1 (274 aa).

A disordered region spans residues Met-1–Arg-28. At Met-1–Pro-37 the chain is on the cytoplasmic side. Positions Asp-13–Gly-26 are enriched in basic and acidic residues. Residues Ala-38–Leu-60 form a helical; Signal-anchor for type II membrane protein membrane-spanning segment. Cys-46 carries S-palmitoyl cysteine lipidation. The segment at Ser-61–Trp-150 is neck. Residues Ser-61 to Gln-274 lie on the Extracellular side of the membrane. The stretch at Arg-89–Gly-142 forms a coiled coil. A glycan (N-linked (GlcNAc...) asparagine) is linked at Asn-139. 3 disulfide bridges follow: Cys-144–Cys-155, Cys-172–Cys-264, and Cys-243–Cys-256. Residues His-151–Gln-265 form the C-type lectin domain.

In terms of assembly, homodimer; disulfide-linked. May form a hexamer composed of 3 homodimers. Interacts with HSP70. N-glycosylated.

The protein resides in the cell membrane. It localises to the membrane raft. It is found in the secreted. Receptor that mediates the recognition, internalization and degradation of oxidatively modified low density lipoprotein (oxLDL) by vascular endothelial cells. OxLDL is a marker of atherosclerosis that induces vascular endothelial cell activation and dysfunction, resulting in pro-inflammatory responses, pro-oxidative conditions and apoptosis. Its association with oxLDL induces the activation of NF-kappa-B through an increased production of intracellular reactive oxygen and a variety of pro-atherogenic cellular responses including a reduction of nitric oxide (NO) release, monocyte adhesion and apoptosis. In addition to binding oxLDL, it acts as a receptor for the HSP70 protein involved in antigen cross-presentation to naive T-cells in dendritic cells, thereby participating in cell-mediated antigen cross-presentation. Also involved in inflammatory process, by acting as a leukocyte-adhesion molecule at the vascular interface in endotoxin-induced inflammation. Also acts as a receptor for advanced glycation end (AGE) products, activated platelets, monocytes, apoptotic cells and both Gram-negative and Gram-positive bacteria. The protein is Oxidized low-density lipoprotein receptor 1 (OLR1) of Sus scrofa (Pig).